We begin with the raw amino-acid sequence, 184 residues long: Female-specific protein transformer (184 aa).

2 stretches are compositionally biased toward basic and acidic residues: residues 1–39 (MKMD…DSRK) and 49–58 (DEVREQDRIR). 2 disordered regions span residues 1 to 123 (MKMD…PKII) and 146 to 184 (YQRL…RPPY). Composition is skewed to basic residues over residues 59-75 (SLRQ…RSRS) and 84-114 (SRHR…RSPH). A compositionally biased stretch (pro residues) spans 150 to 159 (PRPPPFPPAP).

It localises to the nucleus speckle. Functionally, member of the regulatory pathway controlling female somatic sexual differentiation, regulated by Sxl. Activates dsx female-specific splicing by promoting the formation of a splicing enhancer complex which consists of tra, tra2 and sr proteins. This chain is Female-specific protein transformer (tra), found in Drosophila simulans (Fruit fly).